Reading from the N-terminus, the 394-residue chain is Xylose isomerase (394 aa).

Residues His-54 and Asp-57 contribute to the active site. Positions 181, 217, 220, 245, 255, 257, and 292 each coordinate Mg(2+).

This sequence belongs to the xylose isomerase family. In terms of assembly, homotetramer. Mg(2+) is required as a cofactor.

It is found in the cytoplasm. It catalyses the reaction alpha-D-xylose = alpha-D-xylulofuranose. The polypeptide is Xylose isomerase (xylA) (Actinoplanes sp. (strain ATCC 31351 / 3876) (Ampullariella sp.)).